The primary structure comprises 245 residues: tRNA pseudouridine synthase A 2 (245 aa).

Aspartate 53 acts as the Nucleophile in catalysis. Tyrosine 111 contacts substrate.

Belongs to the tRNA pseudouridine synthase TruA family. Homodimer.

It carries out the reaction uridine(38/39/40) in tRNA = pseudouridine(38/39/40) in tRNA. Its function is as follows. Formation of pseudouridine at positions 38, 39 and 40 in the anticodon stem and loop of transfer RNAs. The chain is tRNA pseudouridine synthase A 2 from Bacillus anthracis.